A 229-amino-acid polypeptide reads, in one-letter code: Potassium/proton antiporter CemA (229 aa).

3 helical membrane passes run 7–27, 106–126, and 189–209; these read LTPL…SLSF, IILH…FFIM, and IISG…KYWI.

It belongs to the CemA family.

It is found in the plastid. The protein localises to the chloroplast inner membrane. The catalysed reaction is K(+)(in) + H(+)(out) = K(+)(out) + H(+)(in). In terms of biological role, contributes to K(+)/H(+) antiport activity by supporting proton efflux to control proton extrusion and homeostasis in chloroplasts in a light-dependent manner to modulate photosynthesis. Prevents excessive induction of non-photochemical quenching (NPQ) under continuous-light conditions. Indirectly promotes efficient inorganic carbon uptake into chloroplasts. The polypeptide is Potassium/proton antiporter CemA (Ceratophyllum demersum (Rigid hornwort)).